Here is a 481-residue protein sequence, read N- to C-terminus: N-succinylglutamate 5-semialdehyde dehydrogenase (481 aa).

206 to 211 (GSARTG) is a binding site for NAD(+). Catalysis depends on residues E229 and C263.

The protein belongs to the aldehyde dehydrogenase family. AstD subfamily.

It carries out the reaction N-succinyl-L-glutamate 5-semialdehyde + NAD(+) + H2O = N-succinyl-L-glutamate + NADH + 2 H(+). Its pathway is amino-acid degradation; L-arginine degradation via AST pathway; L-glutamate and succinate from L-arginine: step 4/5. Its function is as follows. Catalyzes the NAD-dependent reduction of succinylglutamate semialdehyde into succinylglutamate. The sequence is that of N-succinylglutamate 5-semialdehyde dehydrogenase from Sphingopyxis alaskensis (strain DSM 13593 / LMG 18877 / RB2256) (Sphingomonas alaskensis).